Consider the following 943-residue polypeptide: Calcium-activated chloride channel regulator 2 (943 aa).

Residues 1–31 form the signal peptide; it reads MTQRSIAGPICNLKFVTLLVALSSELPFLGA. Topologically, residues 32–901 are extracellular; the sequence is GVQLQDNGYN…SDPVPARDYL (870 aa). The segment at 54-205 is metalloprotease domain; sequence NQNLISNIKE…CSSDITGIFV (152 aa). Residues N74 and N150 are each glycosylated (N-linked (GlcNAc...) asparagine). H164 serves as a coordination point for Zn(2+). E165 is a catalytic residue. The Zn(2+) site is built by H168 and D175. N231 carries N-linked (GlcNAc...) asparagine glycosylation. The 173-residue stretch at 311 to 483 folds into the VWFA domain; it reads VVCLVLDVSS…NSMIDAFSRI (173 aa). N522 and N822 each carry an N-linked (GlcNAc...) asparagine glycan. The helical transmembrane segment at 902–922 threads the bilayer; sequence ILKGVLTAMGLIGIICLIIVV. The Cytoplasmic portion of the chain corresponds to 923–943; sequence THHTLSRKKRADKKENGTKLL.

Belongs to the CLCR family. In terms of processing, the 141 kDa mature form is autoproteolytically cleaved by the metalloprotease domain, producing a 109 kDa form and a 35 kDa form. The cleavage is necessary for calcium-activated chloride channel (CaCC) activation activity. N-glycosylated. As to expression, expressed in cornea, skin, vagina, esophagus, and larynx (at protein level). Expressed in trachea and mammary gland. Weakly expressed in testis and kidney. Highly expressed in corneal epithelium, colon and trachea. Moderately expressed in brain, urogenital organs, bladder, uterus and prostate. Highly expressed in tissues containing stratified epithelium including cornea, esophagus, larynx, skin and vagina than those tissues which contain only epithelial monolayers. Expressed in normal breast epithelium but not in breast cancer. Highly expressed during epithelial stratification. Expressed in endothelial cells of lung. Expressed selectively in endothelia of small pulmonary arteries, arterioles, and subpleural and interlobular venules.

It is found in the cell membrane. It localises to the basal cell membrane. Its subcellular location is the cell junction. The protein localises to the secreted. Its function is as follows. Plays a role in modulating chloride current across the plasma membrane in a calcium-dependent manner, and cell adhesion. Involved in basal cell adhesion and/or stratification of squamous epithelia. May act as a tumor suppressor in breast and colorectal cancer. Plays a key role for cell adhesion in the beginning stages of lung metastasis via the binding to ITGB4. This chain is Calcium-activated chloride channel regulator 2 (CLCA2), found in Homo sapiens (Human).